Here is a 290-residue protein sequence, read N- to C-terminus: uncharacterized protein (290 aa).

NAD(+) contacts are provided by residues 7 to 21 and threonine 100; that span reads AVFG…MAQN. Lysine 175 is a catalytic residue. Lysine 243 contributes to the NAD(+) binding site.

Belongs to the HIBADH-related family.

This is an uncharacterized protein from Synechocystis sp. (strain ATCC 27184 / PCC 6803 / Kazusa).